The chain runs to 129 residues: Glycine cleavage system H protein (129 aa).

Residues 22-103 (TGTVGITDYA…AHTAWIMKIE (82 aa)) form the Lipoyl-binding domain. Position 63 is an N6-lipoyllysine (Lys63).

This sequence belongs to the GcvH family. As to quaternary structure, the glycine cleavage system is composed of four proteins: P, T, L and H. It depends on (R)-lipoate as a cofactor.

In terms of biological role, the glycine cleavage system catalyzes the degradation of glycine. The H protein shuttles the methylamine group of glycine from the P protein to the T protein. This Acidobacterium capsulatum (strain ATCC 51196 / DSM 11244 / BCRC 80197 / JCM 7670 / NBRC 15755 / NCIMB 13165 / 161) protein is Glycine cleavage system H protein.